A 907-amino-acid polypeptide reads, in one-letter code: Probable disease resistance protein At1g58390 (907 aa).

Positions 144–456 (QGDRQREMRQ…AEGISTAEDY (313 aa)) constitute an NB-ARC domain. 190–197 (GMGGLGKT) contributes to the ATP binding site. LRR repeat units lie at residues 608–631 (LIHL…LGNL) and 843–868 (MPLL…RFIY).

The protein belongs to the disease resistance NB-LRR family.

Its function is as follows. Possible disease resistance protein. This Arabidopsis thaliana (Mouse-ear cress) protein is Probable disease resistance protein At1g58390.